The chain runs to 275 residues: MPELPEVEVTRRGIAPFVAGRRVERVDVRTAMLRWPVPADLAEQLRAREVLAVERRGKYLLFEVDAGWFIVHLGMTGTLRVLPVAGVPVAAKHDHIDWIFDEFVLRFRDPRRFGAVLWHPREAGDVHAHPLLASLGVEPFSPAFTGALLHARTRGRTVSVKQALLAGDMVVGVGNIYASESLFRAGIRPTTAAGKVSLPRYERLADAVRATLADAIERGGSTLRDFVGSNGESGYFQLDCFAYDRAGLPCRVCGTPIRQIVQGQRSTYFCPTCQR.

The active-site Schiff-base intermediate with DNA is the Pro2. The active-site Proton donor is the Glu3. The active-site Proton donor; for beta-elimination activity is the Lys58. Positions 93, 111, and 156 each coordinate DNA. The FPG-type zinc finger occupies Phe241–Arg275. The Proton donor; for delta-elimination activity role is filled by Arg265.

Belongs to the FPG family. As to quaternary structure, monomer. Zn(2+) serves as cofactor.

The catalysed reaction is Hydrolysis of DNA containing ring-opened 7-methylguanine residues, releasing 2,6-diamino-4-hydroxy-5-(N-methyl)formamidopyrimidine.. The enzyme catalyses 2'-deoxyribonucleotide-(2'-deoxyribose 5'-phosphate)-2'-deoxyribonucleotide-DNA = a 3'-end 2'-deoxyribonucleotide-(2,3-dehydro-2,3-deoxyribose 5'-phosphate)-DNA + a 5'-end 5'-phospho-2'-deoxyribonucleoside-DNA + H(+). In terms of biological role, involved in base excision repair of DNA damaged by oxidation or by mutagenic agents. Acts as a DNA glycosylase that recognizes and removes damaged bases. Has a preference for oxidized purines, such as 7,8-dihydro-8-oxoguanine (8-oxoG). Has AP (apurinic/apyrimidinic) lyase activity and introduces nicks in the DNA strand. Cleaves the DNA backbone by beta-delta elimination to generate a single-strand break at the site of the removed base with both 3'- and 5'-phosphates. In Burkholderia vietnamiensis (strain G4 / LMG 22486) (Burkholderia cepacia (strain R1808)), this protein is Formamidopyrimidine-DNA glycosylase.